The primary structure comprises 69 residues: Large ribosomal subunit protein bL31 (69 aa).

Zn(2+) is bound by residues Cys-16, Cys-18, Cys-38, and Cys-41.

Belongs to the bacterial ribosomal protein bL31 family. Type A subfamily. In terms of assembly, part of the 50S ribosomal subunit. Requires Zn(2+) as cofactor.

Functionally, binds the 23S rRNA. The sequence is that of Large ribosomal subunit protein bL31 from Thermobifida fusca (strain YX).